The chain runs to 492 residues: Catalase isozyme A (492 aa).

Residues 1–23 (MDPCKFRPSSSFDTKTTTTNAGA) are disordered. The segment covering 8–21 (PSSSFDTKTTTTNA) has biased composition (polar residues). Residues His-65 and Asn-138 contribute to the active site. Tyr-348 contacts heme.

The protein belongs to the catalase family. As to quaternary structure, homotetramer. The cofactor is heme.

Its subcellular location is the peroxisome. The protein resides in the glyoxysome. The catalysed reaction is 2 H2O2 = O2 + 2 H2O. In terms of biological role, occurs in almost all aerobically respiring organisms and serves to protect cells from the toxic effects of hydrogen peroxide. The chain is Catalase isozyme A from Oryza sativa subsp. indica (Rice).